The primary structure comprises 149 residues: MSAKSRILVLNGPNINLLGLREPGHYGHQTLPQIVDTLTQQAQTAGIELEHLQSNREYELIEAIHAAHGNVDFIIINPAAFTHTSVALRDALLGVAIPFIEVHLSNVHAREPFRHHSYLSDKALGVICGLGAQGYEFALSAAIARLQAK.

Tyr26 serves as the catalytic Proton acceptor. Residues Asn77, His83, and Asp90 each coordinate substrate. His103 serves as the catalytic Proton donor. Residues 104–105 and Arg114 each bind substrate; that span reads LS.

It belongs to the type-II 3-dehydroquinase family. In terms of assembly, homododecamer.

The enzyme catalyses 3-dehydroquinate = 3-dehydroshikimate + H2O. Its pathway is metabolic intermediate biosynthesis; chorismate biosynthesis; chorismate from D-erythrose 4-phosphate and phosphoenolpyruvate: step 3/7. Catalyzes a trans-dehydration via an enolate intermediate. The chain is 3-dehydroquinate dehydratase from Vibrio vulnificus (strain YJ016).